Reading from the N-terminus, the 311-residue chain is 4-hydroxy-tetrahydrodipicolinate synthase (311 aa).

T49 serves as a coordination point for pyruvate. The active-site Proton donor/acceptor is Y138. K166 acts as the Schiff-base intermediate with substrate in catalysis. Position 207 (I207) interacts with pyruvate.

Belongs to the DapA family. As to quaternary structure, homotetramer; dimer of dimers.

The protein resides in the cytoplasm. It catalyses the reaction L-aspartate 4-semialdehyde + pyruvate = (2S,4S)-4-hydroxy-2,3,4,5-tetrahydrodipicolinate + H2O + H(+). Its pathway is amino-acid biosynthesis; L-lysine biosynthesis via DAP pathway; (S)-tetrahydrodipicolinate from L-aspartate: step 3/4. Its function is as follows. Catalyzes the condensation of (S)-aspartate-beta-semialdehyde [(S)-ASA] and pyruvate to 4-hydroxy-tetrahydrodipicolinate (HTPA). This is 4-hydroxy-tetrahydrodipicolinate synthase from Lactobacillus acidophilus (strain ATCC 700396 / NCK56 / N2 / NCFM).